The following is a 423-amino-acid chain: Endochitinase 42 (423 aa).

Positions 1 to 22 (MLSFLGKSVALLAALQATLSSP) are cleaved as a signal peptide. Residues 23-34 (KPGHRRASVEKR) constitute a propeptide that is removed on maturation. The region spanning 38-401 (YANSVYFTNW…GTSHRALGGL (364 aa)) is the GH18 domain. Chitin-binding positions include 102–103 (GT) and 129–132 (GGWT). Residue glutamate 171 is the Proton donor of the active site. Residue tyrosine 172 participates in chitin binding. A glycan (N-linked (GlcNAc...) asparagine) is linked at asparagine 218. Chitin-binding positions include 237–240 (MAYD) and tryptophan 378.

It belongs to the glycosyl hydrolase 18 family. Chitinase class V subfamily.

It is found in the secreted. It carries out the reaction Random endo-hydrolysis of N-acetyl-beta-D-glucosaminide (1-&gt;4)-beta-linkages in chitin and chitodextrins.. Secreted chitinase involved in the degradation of chitin, a component of the cell walls of fungi and exoskeletal elements of some animals (including worms and arthropods). Plays a morphogenetic role during apical growth, cell division and differentiation (cell wall morphogenesis). Also acts as an antifungal agent. Involved in the degradation and further assimilation of phytopathogenic fungi, namely mycoparasitism, the major mechanism accounting for the antagonistic activity against phytopathogenic fungi displayed by Trichoderma. The protein is Endochitinase 42 (chit42) of Trichoderma harzianum (Hypocrea lixii).